The following is a 322-amino-acid chain: Aspartate carbamoyltransferase catalytic subunit (322 aa).

The carbamoyl phosphate site is built by Arg-65 and Thr-66. Residue Lys-93 coordinates L-aspartate. Positions 115, 143, and 146 each coordinate carbamoyl phosphate. The L-aspartate site is built by Arg-176 and Arg-230. 2 residues coordinate carbamoyl phosphate: Gly-271 and Pro-272.

Belongs to the aspartate/ornithine carbamoyltransferase superfamily. ATCase family. In terms of assembly, heterododecamer (2C3:3R2) of six catalytic PyrB chains organized as two trimers (C3), and six regulatory PyrI chains organized as three dimers (R2).

It carries out the reaction carbamoyl phosphate + L-aspartate = N-carbamoyl-L-aspartate + phosphate + H(+). Its pathway is pyrimidine metabolism; UMP biosynthesis via de novo pathway; (S)-dihydroorotate from bicarbonate: step 2/3. Functionally, catalyzes the condensation of carbamoyl phosphate and aspartate to form carbamoyl aspartate and inorganic phosphate, the committed step in the de novo pyrimidine nucleotide biosynthesis pathway. This Brucella anthropi (strain ATCC 49188 / DSM 6882 / CCUG 24695 / JCM 21032 / LMG 3331 / NBRC 15819 / NCTC 12168 / Alc 37) (Ochrobactrum anthropi) protein is Aspartate carbamoyltransferase catalytic subunit.